The sequence spans 347 residues: Isopentenyl-diphosphate delta-isomerase (347 aa).

9–10 contributes to the substrate binding site; sequence RK. FMN is bound by residues 65–67, S95, and N124; that span reads AMT. 95 to 97 contributes to the substrate binding site; it reads STH. Residue Q154 coordinates substrate. Residue E155 participates in Mg(2+) binding. Residues K186, S211, T216, 262-264, and 283-284 contribute to the FMN site; these read GVR and SR.

Belongs to the IPP isomerase type 2 family. As to quaternary structure, homooctamer. Dimer of tetramers. FMN serves as cofactor. NADPH is required as a cofactor. The cofactor is Mg(2+).

The protein resides in the cytoplasm. It carries out the reaction isopentenyl diphosphate = dimethylallyl diphosphate. Functionally, involved in the biosynthesis of isoprenoids. Catalyzes the 1,3-allylic rearrangement of the homoallylic substrate isopentenyl (IPP) to its allylic isomer, dimethylallyl diphosphate (DMAPP). This Staphylococcus saprophyticus subsp. saprophyticus (strain ATCC 15305 / DSM 20229 / NCIMB 8711 / NCTC 7292 / S-41) protein is Isopentenyl-diphosphate delta-isomerase.